The sequence spans 586 residues: Chaperone protein HscA homolog (586 aa).

It belongs to the heat shock protein 70 family.

Functionally, chaperone involved in the maturation of iron-sulfur cluster-containing proteins. Has a low intrinsic ATPase activity which is markedly stimulated by HscB. This Rickettsia typhi (strain ATCC VR-144 / Wilmington) protein is Chaperone protein HscA homolog.